The chain runs to 226 residues: ATP synthase F(0) complex subunit a (226 aa).

Helical transmembrane passes span 6-26, 68-88, 97-117, 138-158, 164-184, and 189-209; these read FASF…IILF, WSLM…LGLL, QLSM…VMGF, IPML…ALAV, ITAG…LSTI, and TLII…VALI.

Belongs to the ATPase A chain family. In terms of assembly, component of the ATP synthase complex composed at least of ATP5F1A/subunit alpha, ATP5F1B/subunit beta, ATP5MC1/subunit c (homooctomer), MT-ATP6/subunit a, MT-ATP8/subunit 8, ATP5ME/subunit e, ATP5MF/subunit f, ATP5MG/subunit g, ATP5MK/subunit k, ATP5MJ/subunit j, ATP5F1C/subunit gamma, ATP5F1D/subunit delta, ATP5F1E/subunit epsilon, ATP5PF/subunit F6, ATP5PB/subunit b, ATP5PD/subunit d, ATP5PO/subunit OSCP. ATP synthase complex consists of a soluble F(1) head domain (subunits alpha(3) and beta(3)) - the catalytic core - and a membrane F(0) domain - the membrane proton channel (subunits c, a, 8, e, f, g, k and j). These two domains are linked by a central stalk (subunits gamma, delta, and epsilon) rotating inside the F1 region and a stationary peripheral stalk (subunits F6, b, d, and OSCP). Interacts with DNAJC30; interaction is direct.

The protein localises to the mitochondrion inner membrane. The enzyme catalyses H(+)(in) = H(+)(out). Functionally, subunit a, of the mitochondrial membrane ATP synthase complex (F(1)F(0) ATP synthase or Complex V) that produces ATP from ADP in the presence of a proton gradient across the membrane which is generated by electron transport complexes of the respiratory chain. ATP synthase complex consist of a soluble F(1) head domain - the catalytic core - and a membrane F(1) domain - the membrane proton channel. These two domains are linked by a central stalk rotating inside the F(1) region and a stationary peripheral stalk. During catalysis, ATP synthesis in the catalytic domain of F(1) is coupled via a rotary mechanism of the central stalk subunits to proton translocation. With the subunit c (ATP5MC1), forms the proton-conducting channel in the F(0) domain, that contains two crucial half-channels (inlet and outlet) that facilitate proton movement from the mitochondrial intermembrane space (IMS) into the matrix. Protons are taken up via the inlet half-channel and released through the outlet half-channel, following a Grotthuss mechanism. The polypeptide is ATP synthase F(0) complex subunit a (Pan paniscus (Pygmy chimpanzee)).